The following is a 606-amino-acid chain: Putative mitochondrial ATP-dependent helicase irc3 (606 aa).

The Helicase ATP-binding domain maps to 40-201; it reads NAFDEGKRRI…ACGLDEIVYH (162 aa). 53-60 is an ATP binding site; it reads LATGSGKT. Residues 148–151 carry the DEAH box motif; the sequence is DEVH. The 153-residue stretch at 246 to 398 folds into the Helicase C-terminal domain; sequence QSEKAIFEIP…LSPDEVENFY (153 aa).

The protein belongs to the helicase family. IRC3 subfamily.

It is found in the mitochondrion. In Schizosaccharomyces pombe (strain 972 / ATCC 24843) (Fission yeast), this protein is Putative mitochondrial ATP-dependent helicase irc3 (irc3).